Consider the following 445-residue polypeptide: Putative H/ACA ribonucleoprotein complex subunit 4 (445 aa).

Residues 1–32 (MGKKDKRSKLEGDELAEAQQKGSFQLPSSNET) are disordered. The segment covering 20–32 (QKGSFQLPSSNET) has biased composition (polar residues). Residue Asp-113 is the Nucleophile of the active site. The region spanning 284-359 (HKRVVVKDSC…IVAKSKRVIM (76 aa)) is the PUA domain. The tract at residues 407-445 (TDKVKKEQEDKEDEEEEEAPKKKSKKAAKKEVSSSSDSE) is disordered.

The protein belongs to the pseudouridine synthase TruB family. Component of the small nucleolar ribonucleoprotein particle containing H/ACA-type snoRNAs (H/ACA snoRNPs).

The protein resides in the nucleus. Its subcellular location is the nucleolus. It catalyses the reaction a uridine in RNA = a pseudouridine in RNA. In terms of biological role, plays a central role in ribosomal RNA processing. Probable catalytic subunit of H/ACA small nucleolar ribonucleoprotein (H/ACA snoRNP) complex, which catalyzes pseudouridylation of rRNA. This involves the isomerization of uridine such that the ribose is subsequently attached to C5, instead of the normal N1. Pseudouridine ('psi') residues may serve to stabilize the conformation of rRNAs. The polypeptide is Putative H/ACA ribonucleoprotein complex subunit 4 (Caenorhabditis briggsae).